The chain runs to 351 residues: Silk gland factor 3 (351 aa).

2 disordered regions span residues 61–88 and 131–154; these read ADPW…HDHR and SSPR…TPTS. A compositionally biased stretch (basic and acidic residues) spans 135-145; the sequence is DPLHHHAMERD. Residues 149-223 form the POU-specific domain; that stretch reads EDTPTSDDLE…LLQKWLEEAD (75 aa). Residues 241–300 constitute a DNA-binding region (homeobox); it reads KRKKRTSIEVSVKGALEQHFHKQPKPSAQEITSLADSLQLEKEVVRVWFCNRRQKEKRMT. A disordered region spans residues 314–351; that stretch reads GHAHYGHGDVHGSPLQHSPPGLSPQHGLPQGAHTLAAH.

Belongs to the POU transcription factor family. Class-3 subfamily. Restricted to the middle silk gland.

The protein resides in the nucleus. Functionally, involved in the transcriptional regulation of sericin-1 gene. This is Silk gland factor 3 (SGF3) from Bombyx mori (Silk moth).